Here is a 270-residue protein sequence, read N- to C-terminus: 4-hydroxy-tetrahydrodipicolinate reductase (270 aa).

NAD(+) contacts are provided by residues 11-16 and glutamate 37; that span reads GAGGRM. Arginine 38 lines the NADP(+) pocket. Residues 101–103 and 125–128 each bind NAD(+); these read GTT and APNM. Histidine 158 (proton donor/acceptor) is an active-site residue. Histidine 159 contributes to the (S)-2,3,4,5-tetrahydrodipicolinate binding site. Lysine 162 serves as the catalytic Proton donor. 168-169 is a (S)-2,3,4,5-tetrahydrodipicolinate binding site; it reads GT.

This sequence belongs to the DapB family.

The protein localises to the cytoplasm. It catalyses the reaction (S)-2,3,4,5-tetrahydrodipicolinate + NAD(+) + H2O = (2S,4S)-4-hydroxy-2,3,4,5-tetrahydrodipicolinate + NADH + H(+). The catalysed reaction is (S)-2,3,4,5-tetrahydrodipicolinate + NADP(+) + H2O = (2S,4S)-4-hydroxy-2,3,4,5-tetrahydrodipicolinate + NADPH + H(+). The protein operates within amino-acid biosynthesis; L-lysine biosynthesis via DAP pathway; (S)-tetrahydrodipicolinate from L-aspartate: step 4/4. In terms of biological role, catalyzes the conversion of 4-hydroxy-tetrahydrodipicolinate (HTPA) to tetrahydrodipicolinate. In Shewanella sp. (strain MR-4), this protein is 4-hydroxy-tetrahydrodipicolinate reductase.